A 127-amino-acid chain; its full sequence is Small ribosomal subunit protein bS6 (127 aa).

A disordered region spans residues Ile102 to Ala127. Positions Glu107–Ala119 are enriched in basic and acidic residues.

The protein belongs to the bacterial ribosomal protein bS6 family.

Functionally, binds together with bS18 to 16S ribosomal RNA. The chain is Small ribosomal subunit protein bS6 from Coxiella burnetii (strain CbuK_Q154) (Coxiella burnetii (strain Q154)).